The chain runs to 540 residues: NAD(P)H-quinone oxidoreductase subunit 2 B, chloroplastic (540 aa).

Helical transmembrane passes span 24–44 (LLLF…GLIL), 57–77 (IPWL…ALLF), 99–119 (IFQF…VEYI), 124–144 (MAIT…MFLC), 149–169 (FITI…LSGY), 183–203 (YLLM…WLYG), 227–247 (PGIS…LSPA), 325–345 (WHLL…LIAI), 353–373 (MLAY…IVGD), 384–404 (YMLF…LFGL), 425–445 (ALSL…AGFF), 448–468 (LYLF…IGLL), and 514–534 (MIVC…IIAI).

The protein belongs to the complex I subunit 2 family. In terms of assembly, NDH is composed of at least 16 different subunits, 5 of which are encoded in the nucleus.

Its subcellular location is the plastid. The protein resides in the chloroplast thylakoid membrane. It catalyses the reaction a plastoquinone + NADH + (n+1) H(+)(in) = a plastoquinol + NAD(+) + n H(+)(out). It carries out the reaction a plastoquinone + NADPH + (n+1) H(+)(in) = a plastoquinol + NADP(+) + n H(+)(out). In terms of biological role, NDH shuttles electrons from NAD(P)H:plastoquinone, via FMN and iron-sulfur (Fe-S) centers, to quinones in the photosynthetic chain and possibly in a chloroplast respiratory chain. The immediate electron acceptor for the enzyme in this species is believed to be plastoquinone. Couples the redox reaction to proton translocation, and thus conserves the redox energy in a proton gradient. The protein is NAD(P)H-quinone oxidoreductase subunit 2 B, chloroplastic of Coffea arabica (Arabian coffee).